Consider the following 615-residue polypeptide: Leucine aminopeptidase 2-1 (615 aa).

Residues 137 to 139 (QCQ) and 261 to 266 (PYGGME) each bind substrate. His-290 lines the Zn(2+) pocket. Catalysis depends on Glu-291, which acts as the Proton acceptor. His-294 and Glu-313 together coordinate Zn(2+). Residue Tyr-380 is the Proton donor of the active site.

This sequence belongs to the peptidase M1 family. Zn(2+) serves as cofactor.

It is found in the cytoplasm. It localises to the nucleus. It catalyses the reaction an epoxide + H2O = an ethanediol. Functionally, aminopeptidase that preferentially cleaves di- and tripeptides. Also has low epoxide hydrolase activity (in vitro). Can hydrolyze the epoxide leukotriene LTA(4) but it forms preferentially 5,6-dihydroxy-7,9,11,14-eicosatetraenoic acid rather than the cytokine leukotriene B(4) as the product compared to the homologous mammalian enzyme (in vitro). The protein is Leucine aminopeptidase 2-1 of Meyerozyma guilliermondii (strain ATCC 6260 / CBS 566 / DSM 6381 / JCM 1539 / NBRC 10279 / NRRL Y-324) (Yeast).